A 316-amino-acid polypeptide reads, in one-letter code: Acetaldehyde dehydrogenase 1 (316 aa).

NAD(+) is bound at residue 12-15 (SGNI). The active-site Acyl-thioester intermediate is Cys-132. Residues 163 to 171 (SAGPGTRAN) and Asn-291 contribute to the NAD(+) site.

This sequence belongs to the acetaldehyde dehydrogenase family.

It carries out the reaction acetaldehyde + NAD(+) + CoA = acetyl-CoA + NADH + H(+). This is Acetaldehyde dehydrogenase 1 from Pseudomonas putida (strain ATCC 700007 / DSM 6899 / JCM 31910 / BCRC 17059 / LMG 24140 / F1).